The sequence spans 98 residues: Integration host factor subunit alpha (98 aa).

The disordered stretch occupies residues 49 to 72 (FGNFDLRDKNQRPGRNPKTGEDIP).

The protein belongs to the bacterial histone-like protein family. In terms of assembly, heterodimer of an alpha and a beta chain.

Its function is as follows. This protein is one of the two subunits of integration host factor, a specific DNA-binding protein that functions in genetic recombination as well as in transcriptional and translational control. The chain is Integration host factor subunit alpha from Shewanella loihica (strain ATCC BAA-1088 / PV-4).